Reading from the N-terminus, the 468-residue chain is Secreted triacylglycerol lipase LIP2 (468 aa).

Residues 1 to 22 form the signal peptide; sequence MFGFRLFILAAVALAYIQCAAA. Cys-125 and Cys-295 form a disulfide bridge. The active-site Nucleophile is Ser-209. Asn-242, Asn-252, and Asn-279 each carry an N-linked (GlcNAc...) asparagine glycan. Active-site residues include Asp-355 and His-389.

The protein belongs to the AB hydrolase superfamily. Lipase family. Class Lip subfamily.

Its subcellular location is the secreted. The enzyme catalyses a triacylglycerol + H2O = a diacylglycerol + a fatty acid + H(+). The catalysed reaction is a monoacylglycerol + H2O = glycerol + a fatty acid + H(+). It catalyses the reaction a diacylglycerol + H2O = a monoacylglycerol + a fatty acid + H(+). Functionally, secreted lipase that hydrolyzes acylglycerol lipids such as triacylglycerols and consequently releases free fatty acid. Due to an absence of fatty acid synthase genes in Malassezia species, secretory lipases are essential for the yeast to generate free fatty acids from degradation of sebum and assimilate them as lipid sources for growth. Plays important roles not only in lipid metabolism but also in the immune response of host cells and pathogenesis. The protein is Secreted triacylglycerol lipase LIP2 of Malassezia furfur (Pityriasis versicolor infection agent).